Here is a 150-residue protein sequence, read N- to C-terminus: Large ribosomal subunit protein bL9 (150 aa).

Belongs to the bacterial ribosomal protein bL9 family.

Binds to the 23S rRNA. This is Large ribosomal subunit protein bL9 from Albidiferax ferrireducens (strain ATCC BAA-621 / DSM 15236 / T118) (Rhodoferax ferrireducens).